Consider the following 562-residue polypeptide: Bacillolysin (562 aa).

The signal sequence occupies residues 1–24 (MKKKKQALKVLLSVGILSSSFAFA). Positions 25–245 (HTSSAAPNNV…KQAAKPAAKP (221 aa)) are cleaved as a propeptide — activation peptide. Residues Asp-303, Asp-305, and Asp-384 each coordinate Ca(2+). His-388 lines the Zn(2+) pocket. Glu-389 is an active-site residue. His-392 and Glu-412 together coordinate Zn(2+). Ca(2+) contacts are provided by Glu-423, Asn-429, Asp-431, Glu-433, Glu-436, Tyr-439, Thr-440, and Asp-446. The active-site Proton donor is His-477.

Belongs to the peptidase M4 family. Requires Ca(2+) as cofactor. The cofactor is Zn(2+).

It localises to the secreted. The catalysed reaction is Similar, but not identical, to that of thermolysin.. In terms of biological role, extracellular zinc metalloprotease. The chain is Bacillolysin (nprM) from Priestia megaterium (strain DSM 319 / IMG 1521) (Bacillus megaterium).